The primary structure comprises 414 residues: Dual-specificity RNA methyltransferase RlmN (414 aa).

E127 functions as the Proton acceptor in the catalytic mechanism. A Radical SAM core domain is found at 133 to 380; it reads GEGRGTLCVS…SPIRMPRGRD (248 aa). C140 and C385 are oxidised to a cystine. Residues C147, C151, and C154 each contribute to the [4Fe-4S] cluster site. S-adenosyl-L-methionine is bound by residues 211–212, S243, 265–267, and N342; these read GE and SLH. Catalysis depends on C385, which acts as the S-methylcysteine intermediate.

This sequence belongs to the radical SAM superfamily. RlmN family. [4Fe-4S] cluster is required as a cofactor.

The protein resides in the cytoplasm. It carries out the reaction adenosine(2503) in 23S rRNA + 2 reduced [2Fe-2S]-[ferredoxin] + 2 S-adenosyl-L-methionine = 2-methyladenosine(2503) in 23S rRNA + 5'-deoxyadenosine + L-methionine + 2 oxidized [2Fe-2S]-[ferredoxin] + S-adenosyl-L-homocysteine. It catalyses the reaction adenosine(37) in tRNA + 2 reduced [2Fe-2S]-[ferredoxin] + 2 S-adenosyl-L-methionine = 2-methyladenosine(37) in tRNA + 5'-deoxyadenosine + L-methionine + 2 oxidized [2Fe-2S]-[ferredoxin] + S-adenosyl-L-homocysteine. Specifically methylates position 2 of adenine 2503 in 23S rRNA and position 2 of adenine 37 in tRNAs. m2A2503 modification seems to play a crucial role in the proofreading step occurring at the peptidyl transferase center and thus would serve to optimize ribosomal fidelity. The polypeptide is Dual-specificity RNA methyltransferase RlmN (Bartonella bacilliformis (strain ATCC 35685 / KC583 / Herrer 020/F12,63)).